Reading from the N-terminus, the 83-residue chain is High-potential iron-sulfur protein (83 aa).

[4Fe-4S] cluster is bound by residues cysteine 43, cysteine 46, cysteine 61, and cysteine 75.

It belongs to the high-potential iron-sulfur protein (HiPIP) family. In terms of assembly, homodimer.

It is found in the periplasm. Functionally, specific class of high-redox-potential 4Fe-4S ferredoxins. Functions in anaerobic electron transport in most purple and in some other photosynthetic bacteria and in at least one genus (Paracoccus) of halophilic, denitrifying bacteria. This is High-potential iron-sulfur protein (hip) from Marichromatium gracile (Chromatium gracile).